A 398-amino-acid polypeptide reads, in one-letter code: Abhydrolase domain-containing protein 2 (398 aa).

Residues M1–A4 are Cytoplasmic-facing. The chain crosses the membrane as a helical; Signal-anchor for type II membrane protein span at residues F5–V22. Over H23–P398 the chain is Extracellular. In terms of domain architecture, AB hydrolase-1 spans V113–G365. Active-site charge relay system residues include S192, D328, and H359.

This sequence belongs to the AB hydrolase superfamily. AB hydrolase 4 family.

The protein resides in the membrane. The protein is Abhydrolase domain-containing protein 2 (Hydr2) of Drosophila melanogaster (Fruit fly).